Consider the following 436-residue polypeptide: O-phosphoseryl-tRNA(Sec) selenium transferase (436 aa).

The tract at residues 1-44 (MLDFNIEGLIPKNMEKRGELVLNEYLKEIEDVFNHRKIPENGID) is tetramerization. Position 72 (R72) interacts with pyridoxal 5'-phosphate. The tract at residues 93–103 (GRSGNLVDPQP) is phosphate loop (P-loop). Substrate is bound by residues R94, S95, and Q102. The residue at position 278 (K278) is an N6-(pyridoxal phosphate)lysine. Residue R307 participates in substrate binding.

This sequence belongs to the SepSecS family. Homotetramer. Pyridoxal 5'-phosphate serves as cofactor.

The enzyme catalyses O-phospho-L-seryl-tRNA(Sec) + selenophosphate + H2O = L-selenocysteinyl-tRNA(Sec) + 2 phosphate. The protein operates within aminoacyl-tRNA biosynthesis; selenocysteinyl-tRNA(Sec) biosynthesis; selenocysteinyl-tRNA(Sec) from L-seryl-tRNA(Sec) (archaeal/eukaryal route): step 2/2. Converts O-phosphoseryl-tRNA(Sec) to selenocysteinyl-tRNA(Sec) required for selenoprotein biosynthesis. The sequence is that of O-phosphoseryl-tRNA(Sec) selenium transferase (spcS) from Methanococcus maripaludis (strain DSM 14266 / JCM 13030 / NBRC 101832 / S2 / LL).